Reading from the N-terminus, the 534-residue chain is ATP synthase subunit alpha (534 aa).

170–177 (GDRQTGKT) contributes to the ATP binding site. The segment at 505–534 (HEDARVKSETAQAAGKDKDEKAAATAGAGK) is disordered.

This sequence belongs to the ATPase alpha/beta chains family. F-type ATPases have 2 components, CF(1) - the catalytic core - and CF(0) - the membrane proton channel. CF(1) has five subunits: alpha(3), beta(3), gamma(1), delta(1), epsilon(1). CF(0) has three main subunits: a(1), b(2) and c(9-12). The alpha and beta chains form an alternating ring which encloses part of the gamma chain. CF(1) is attached to CF(0) by a central stalk formed by the gamma and epsilon chains, while a peripheral stalk is formed by the delta and b chains.

It is found in the cell inner membrane. It catalyses the reaction ATP + H2O + 4 H(+)(in) = ADP + phosphate + 5 H(+)(out). Its function is as follows. Produces ATP from ADP in the presence of a proton gradient across the membrane. The alpha chain is a regulatory subunit. This chain is ATP synthase subunit alpha, found in Acidobacterium capsulatum (strain ATCC 51196 / DSM 11244 / BCRC 80197 / JCM 7670 / NBRC 15755 / NCIMB 13165 / 161).